A 145-amino-acid chain; its full sequence is uncharacterized protein (145 aa).

Met-1 carries the post-translational modification N-acetylmethionine. The segment at 15–41 (QLKNNSGGTNGDRNSGANNGGGENSAP) is disordered. A compositionally biased stretch (polar residues) spans 16-27 (LKNNSGGTNGDR). Phosphoserine is present on residues Ser-121 and Ser-126. The interval 125 to 145 (NSFDKQNAKNDDDEDDDDFFD) is disordered. A compositionally biased stretch (acidic residues) spans 135 to 145 (DDDEDDDDFFD).

Belongs to the PDCD5 family.

This is an uncharacterized protein from Saccharomyces cerevisiae (strain ATCC 204508 / S288c) (Baker's yeast).